We begin with the raw amino-acid sequence, 723 residues long: Catalase-peroxidase (723 aa).

Residues 98–226 constitute a cross-link (tryptophyl-tyrosyl-methioninium (Trp-Tyr) (with M-252)); it reads WHAAGSYRAA…LAAVQMGLIY (129 aa). Histidine 99 functions as the Proton acceptor in the catalytic mechanism. The segment at residues 226–252 is a cross-link (tryptophyl-tyrosyl-methioninium (Tyr-Met) (with W-98)); that stretch reads YVNPEGVNGKPDPLKTAAQVRETFARM. Histidine 267 lines the heme b pocket. The interval 267-286 is disordered; that stretch reads HTVGKTHGNGRAENLGPSPE.

It belongs to the peroxidase family. Peroxidase/catalase subfamily. In terms of assembly, homodimer or homotetramer. Heme b is required as a cofactor. In terms of processing, formation of the three residue Trp-Tyr-Met cross-link is important for the catalase, but not the peroxidase activity of the enzyme.

It carries out the reaction H2O2 + AH2 = A + 2 H2O. The enzyme catalyses 2 H2O2 = O2 + 2 H2O. In terms of biological role, bifunctional enzyme with both catalase and broad-spectrum peroxidase activity. The polypeptide is Catalase-peroxidase (Thioalkalivibrio sulfidiphilus (strain HL-EbGR7)).